A 316-amino-acid chain; its full sequence is Methionyl-tRNA formyltransferase (316 aa).

Position 114–117 (S114–P117) interacts with (6S)-5,6,7,8-tetrahydrofolate.

This sequence belongs to the Fmt family.

It catalyses the reaction L-methionyl-tRNA(fMet) + (6R)-10-formyltetrahydrofolate = N-formyl-L-methionyl-tRNA(fMet) + (6S)-5,6,7,8-tetrahydrofolate + H(+). Its function is as follows. Attaches a formyl group to the free amino group of methionyl-tRNA(fMet). The formyl group appears to play a dual role in the initiator identity of N-formylmethionyl-tRNA by promoting its recognition by IF2 and preventing the misappropriation of this tRNA by the elongation apparatus. The protein is Methionyl-tRNA formyltransferase of Aromatoleum aromaticum (strain DSM 19018 / LMG 30748 / EbN1) (Azoarcus sp. (strain EbN1)).